The following is a 306-amino-acid chain: tRNA pseudouridine synthase B (306 aa).

The Nucleophile role is filled by aspartate 43.

The protein belongs to the pseudouridine synthase TruB family. Type 1 subfamily.

It catalyses the reaction uridine(55) in tRNA = pseudouridine(55) in tRNA. Responsible for synthesis of pseudouridine from uracil-55 in the psi GC loop of transfer RNAs. The sequence is that of tRNA pseudouridine synthase B from Anaplasma marginale (strain St. Maries).